The chain runs to 1105 residues: Integrator complex subunit 2 (1105 aa).

Residues 822-842 traverse the membrane as a helical segment; it reads FVFCSPYLLMILLRILKGSLA.

It belongs to the Integrator subunit 2 family. As to quaternary structure, belongs to the multiprotein complex Integrator, at least composed of IntS1, IntS2, IntS3, IntS4, omd/IntS5, IntS6, defl/IntS7, IntS8, IntS9, IntS10, IntS11, IntS12, asun/IntS13, IntS14 and IntS15. The core complex associates with protein phosphatase 2A subunits mts/PP2A and Pp2A-29B, to form the Integrator-PP2A (INTAC) complex.

The protein localises to the nucleus membrane. It is found in the nucleus. In terms of biological role, component of the integrator complex, a multiprotein complex that terminates RNA polymerase II (Pol II) transcription in the promoter-proximal region of genes. The integrator complex provides a quality checkpoint during transcription elongation by driving premature transcription termination of transcripts that are unfavorably configured for transcriptional elongation: the complex terminates transcription by (1) catalyzing dephosphorylation of the C-terminal domain (CTD) of Pol II subunit Polr2A/Rbp1 and Spt5, and (2) degrading the exiting nascent RNA transcript via endonuclease activity. The integrator complex is also involved in the 3'-end processing of the U7 snRNA, and also the spliceosomal snRNAs U1, U2, U4 and U5. The sequence is that of Integrator complex subunit 2 from Drosophila melanogaster (Fruit fly).